The primary structure comprises 230 residues: Phosphatidylserine decarboxylase proenzyme (230 aa).

The active-site Schiff-base intermediate with substrate; via pyruvic acid is Ser-186. Residue Ser-186 is modified to Pyruvic acid (Ser); by autocatalysis.

It belongs to the phosphatidylserine decarboxylase family. PSD-A subfamily. Heterodimer of a large membrane-associated beta subunit and a small pyruvoyl-containing alpha subunit. The cofactor is pyruvate. In terms of processing, is synthesized initially as an inactive proenzyme. Formation of the active enzyme involves a self-maturation process in which the active site pyruvoyl group is generated from an internal serine residue via an autocatalytic post-translational modification. Two non-identical subunits are generated from the proenzyme in this reaction, and the pyruvate is formed at the N-terminus of the alpha chain, which is derived from the carboxyl end of the proenzyme. The post-translation cleavage follows an unusual pathway, termed non-hydrolytic serinolysis, in which the side chain hydroxyl group of the serine supplies its oxygen atom to form the C-terminus of the beta chain, while the remainder of the serine residue undergoes an oxidative deamination to produce ammonia and the pyruvoyl prosthetic group on the alpha chain.

The protein resides in the cell membrane. It catalyses the reaction a 1,2-diacyl-sn-glycero-3-phospho-L-serine + H(+) = a 1,2-diacyl-sn-glycero-3-phosphoethanolamine + CO2. Its pathway is phospholipid metabolism; phosphatidylethanolamine biosynthesis; phosphatidylethanolamine from CDP-diacylglycerol: step 2/2. In terms of biological role, catalyzes the formation of phosphatidylethanolamine (PtdEtn) from phosphatidylserine (PtdSer). This is Phosphatidylserine decarboxylase proenzyme from Wolbachia pipientis wMel.